Here is a 200-residue protein sequence, read N- to C-terminus: MAKKTYDLLFKLLLIGDSGVGKTCVLFRFSDDAFNTTFISTIEIDFKIKTVELQGKKIKLQIWDTAGQERFHTITTSYYRGAMGIMLVYDITNGKSFENISKWLRNIDQHANEDVERMLLRNKCDMDHKRVVPKGKGEQIAREHRIRFFETSAKANINIEKAFLTLPEDILRKTPVKEPNSENVDISSGGGVTGWKSKCC.

The GTP site is built by S18, G19, V20, G21, K22, T23, C24, N35, T36, S40, and T41. Mg(2+) is bound at residue T23. Short sequence motifs (switch) lie at residues 32-46 (DAFN…EIDF) and 64-81 (DTAG…YYRG). Residues T41 and D64 each coordinate Mg(2+). Residue G67 participates in GTP binding. Phosphothreonine is present on T73. At K102 the chain carries N6-acetyllysine. Residue K102 forms a Glycyl lysine isopeptide (Lys-Gly) (interchain with G-Cter in ubiquitin) linkage. 4 residues coordinate GTP: N122, K123, D125, and M126. K136 participates in a covalent cross-link: Glycyl lysine isopeptide (Lys-Gly) (interchain with G-Cter in ubiquitin). Positions 152, 153, and 154 each coordinate GTP. K154 is covalently cross-linked (Glycyl lysine isopeptide (Lys-Gly) (interchain with G-Cter in ubiquitin)). 2 S-geranylgeranyl cysteine lipidation sites follow: C199 and C200.

The protein belongs to the small GTPase superfamily. Rab family. In terms of assembly, interacts with MYO5A; mediates the transport to the plasma membrane of SLC2A4/GLUT4 storage vesicles. Interacts with GDI1 and with GDI2; negatively regulates RAB10 association with membranes and activation. Interacts (GDP-bound form) with LLGL1; the interaction is direct and promotes RAB10 association with membranes and activation through competition with the Rab inhibitor GDI1. Interacts with EXOC4; probably associates with the exocyst. Interacts (GTP-bound form) with MICALCL, MICAL1, MICAL3, EHBP1 and EHBP1L1; at least in case of MICAL1 two molecules of RAB10 can bind to one molecule of MICAL1. Interacts with TBC1D13. Interacts with SEC16A. Interacts with CHM. Interacts with LRRK2; interaction facilitates phosphorylation of Thr-73. Interacts with RILPL1 and RILPL2 when phosphorylated on Thr-73. Interacts with TBC1D21. Interacts with MARCKS. Mg(2+) serves as cofactor. Post-translationally, phosphorylation of Thr-73 in the switch II region by LRRK2 prevents the association of RAB regulatory proteins, including CHM and RAB GDP dissociation inhibitors GDI1 and GDI2. Phosphorylation of Thr-73 by LRRK2 is stimulated by RAB29 and RAB32. Phosphorylation by LRRK2 is required for localization to stressed lysosomes. Highest levels in neural and muscle tissues.

The protein resides in the cytoplasmic vesicle membrane. It localises to the golgi apparatus. Its subcellular location is the trans-Golgi network membrane. The protein localises to the endosome membrane. It is found in the recycling endosome membrane. The protein resides in the cytoplasmic vesicle. It localises to the phagosome membrane. Its subcellular location is the cell projection. The protein localises to the cilium. It is found in the endoplasmic reticulum membrane. The protein resides in the cytoplasm. It localises to the perinuclear region. Its subcellular location is the lysosome. The catalysed reaction is GTP + H2O = GDP + phosphate + H(+). With respect to regulation, regulated by guanine nucleotide exchange factors (GEFs) DENND4C and RABIF which promote the exchange of bound GDP for free GTP. Regulated by GTPase activating proteins (GAPs) including TBC1D21 which increase the GTP hydrolysis activity. Inhibited by GDP dissociation inhibitors GDI1 and GDI2 which prevent Rab-GDP dissociation. In terms of biological role, the small GTPases Rab are key regulators of intracellular membrane trafficking, from the formation of transport vesicles to their fusion with membranes. Rabs cycle between an inactive GDP-bound form and an active GTP-bound form that is able to recruit to membranes different set of downstream effectors directly responsible for vesicle formation, movement, tethering and fusion. That Rab is mainly involved in the biosynthetic transport of proteins from the Golgi to the plasma membrane. Regulates, for instance, SLC2A4/GLUT4 glucose transporter-enriched vesicles delivery to the plasma membrane. In parallel, it regulates the transport of TLR4, a toll-like receptor to the plasma membrane and therefore may be important for innate immune response. Also plays a specific role in asymmetric protein transport to the plasma membrane. In neurons, it is involved in axonogenesis through regulation of vesicular membrane trafficking toward the axonal plasma membrane. In epithelial cells, it regulates transport from the Golgi to the basolateral membrane. May play a role in the basolateral recycling pathway and in phagosome maturation. May play a role in endoplasmic reticulum dynamics and morphology controlling tubulation along microtubules and tubules fusion. Together with LRRK2, RAB8A, and RILPL1, it regulates ciliogenesis. When phosphorylated by LRRK2 on Thr-73, it binds RILPL1 and inhibits ciliogenesis. Participates in the export of a subset of neosynthesized proteins through a Rab8-Rab10-Rab11-dependent endososomal export route. Targeted to and stabilized on stressed lysosomes through LRRK2 phosphorylation where it promotes the extracellular release of lysosomal content through EHBP1 and EHNP1L1 effector proteins. The sequence is that of Ras-related protein Rab-10 from Rattus norvegicus (Rat).